The primary structure comprises 168 residues: DOMON domain-containing protein Y73F4A.2 (168 aa).

The signal sequence occupies residues 1-18; sequence MFRSIAVLSALLFAFASA. A DOMON domain is found at 26 to 143; it reads SDFEVYWRFA…CQKWRFVKSG (118 aa). Asparagine 36 carries N-linked (GlcNAc...) asparagine glycosylation. The tract at residues 148-168 is disordered; that stretch reads GQLTRNDKSPKEKKVCPMECN. Over residues 152-168 the composition is skewed to basic and acidic residues; sequence RNDKSPKEKKVCPMECN.

The protein resides in the secreted. This is DOMON domain-containing protein Y73F4A.2 from Caenorhabditis elegans.